Consider the following 253-residue polypeptide: Imidazole glycerol phosphate synthase subunit HisF (253 aa).

Active-site residues include Asp-11 and Asp-130.

The protein belongs to the HisA/HisF family. As to quaternary structure, heterodimer of HisH and HisF.

Its subcellular location is the cytoplasm. The enzyme catalyses 5-[(5-phospho-1-deoxy-D-ribulos-1-ylimino)methylamino]-1-(5-phospho-beta-D-ribosyl)imidazole-4-carboxamide + L-glutamine = D-erythro-1-(imidazol-4-yl)glycerol 3-phosphate + 5-amino-1-(5-phospho-beta-D-ribosyl)imidazole-4-carboxamide + L-glutamate + H(+). It participates in amino-acid biosynthesis; L-histidine biosynthesis; L-histidine from 5-phospho-alpha-D-ribose 1-diphosphate: step 5/9. Its function is as follows. IGPS catalyzes the conversion of PRFAR and glutamine to IGP, AICAR and glutamate. The HisF subunit catalyzes the cyclization activity that produces IGP and AICAR from PRFAR using the ammonia provided by the HisH subunit. The chain is Imidazole glycerol phosphate synthase subunit HisF from Thermoanaerobacter sp. (strain X514).